The chain runs to 330 residues: Autoinducer 2 import system permease protein LsrD (330 aa).

Over 1-4 the chain is Cytoplasmic; it reads MRIR. The chain crosses the membrane as a helical span at residues 5–25; sequence YGWELALAALLVIEIVAFGAI. The Periplasmic segment spans residues 26 to 42; it reads NPRMLDLNMLLFSTSDF. A helical membrane pass occupies residues 43-63; it reads ICIGIVALPLTMVIVSGGIDI. Over 64-67 the chain is Cytoplasmic; sequence SFGS. 2 helical membrane-spanning segments follow: residues 68–88 and 89–109; these read TIGL…PMPL and AILL…GLII. At 110 to 115 the chain is on the cytoplasmic side; it reads YTKVNP. Residues 116–136 traverse the membrane as a helical segment; the sequence is LVITLGTLYLFAGSALLLSGM. Topologically, residues 137-159 are periplasmic; sequence AGATGYEGIGGFPMAFTDFANLD. Residues 160–180 form a helical membrane-spanning segment; the sequence is VLGLPVPLIIFLICLLVFWLW. The Cytoplasmic segment spans residues 181–209; sequence LHKTHAGRNVFLIGQSPRVAVYSAIPVNR. Residues 210–230 form a helical membrane-spanning segment; sequence TLCALYAMTGLASAVAAVLLV. The Periplasmic portion of the chain corresponds to 231–237; it reads SYFGSAR. A run of 2 helical transmembrane segments spans residues 238–258 and 259–279; these read SDLG…GGAN and IYGG…VGYL. The Periplasmic portion of the chain corresponds to 280–285; the sequence is QQGLQM. A helical transmembrane segment spans residues 286–306; that stretch reads AGVPNQVSSALSGALLIVVVV. At 307-330 the chain is on the cytoplasmic side; the sequence is GRSVSLHRQQIKEWLARRANNPLP.

It belongs to the binding-protein-dependent transport system permease family. AraH/RbsC subfamily. As to quaternary structure, the complex is composed of two ATP-binding proteins (LsrA), two transmembrane proteins (LsrC and LsrD) and a solute-binding protein (LsrB).

The protein resides in the cell inner membrane. In terms of biological role, part of the ABC transporter complex LsrABCD involved in autoinducer 2 (AI-2) import. Probably responsible for the translocation of the substrate across the membrane. In Escherichia coli (strain SMS-3-5 / SECEC), this protein is Autoinducer 2 import system permease protein LsrD (lsrD).